The sequence spans 400 residues: MTQFASPVLHSLLDTDAYKLHMQQAVFHHYYDVHVAAEFRCRGDDLLGIYADAIREQIQAMQHLRLQDDEYQWLSALPFFKADYLNWLREFRFNPEQVTVSNDNGKLDIRLSGPWREVILWEVPLLAVISEMVHRYRSPQADVAQALDTLESKLVDFSALTAGLDMSRFHLMDFGTRRRFSREVQETIVKRLQQESWFVGTSNYDLARRLSLTPMGTQAHEWFQAHQQISPDLANSQRAALAAWLEEYPDQLGIALTDCITMDAFLRDFGVEFASRYQGLRHDSGDPVEWGEKAIAHYKKLGIDPQSKTLVFSDNLDLRKAVELYRHFSSRVQLSFGIGTRLTCDIPQVKPLNIVIKLVECNGKPVAKLSDSPGKTICHDKAFVRALRKAFDLPHIKKAS.

His-220 is subject to Phosphohistidine; by autocatalysis.

It belongs to the NAPRTase family. Post-translationally, transiently phosphorylated on a His residue during the reaction cycle. Phosphorylation strongly increases the affinity for substrates and increases the rate of nicotinate D-ribonucleotide production. Dephosphorylation regenerates the low-affinity form of the enzyme, leading to product release.

It catalyses the reaction nicotinate + 5-phospho-alpha-D-ribose 1-diphosphate + ATP + H2O = nicotinate beta-D-ribonucleotide + ADP + phosphate + diphosphate. The protein operates within cofactor biosynthesis; NAD(+) biosynthesis; nicotinate D-ribonucleotide from nicotinate: step 1/1. Its function is as follows. Catalyzes the synthesis of beta-nicotinate D-ribonucleotide from nicotinate and 5-phospho-D-ribose 1-phosphate at the expense of ATP. The sequence is that of Nicotinate phosphoribosyltransferase from Shigella boydii serotype 18 (strain CDC 3083-94 / BS512).